Here is a 377-residue protein sequence, read N- to C-terminus: TelA-like protein SSP1345 (377 aa).

Basic and acidic residues predominate over residues 1–18 (MAREQDSINSHPLDKYID). Positions 1–39 (MAREQDSINSHPLDKYIDENSANESEIIKSSSQFSHEDQ) are disordered. Over residues 20–34 (NSANESEIIKSSSQF) the composition is skewed to polar residues.

Belongs to the TelA family.

The protein is TelA-like protein SSP1345 of Staphylococcus saprophyticus subsp. saprophyticus (strain ATCC 15305 / DSM 20229 / NCIMB 8711 / NCTC 7292 / S-41).